The following is a 235-amino-acid chain: UPF0502 protein Bmul_3231/BMULJ_05293 (235 aa).

The protein belongs to the UPF0502 family.

This is UPF0502 protein Bmul_3231/BMULJ_05293 from Burkholderia multivorans (strain ATCC 17616 / 249).